A 142-amino-acid chain; its full sequence is Natriuretic peptides A (142 aa).

Positions 1–23 (MMLKTVIYTGVLFLICNKVLVRA) are cleaved as a signal peptide. Positions 24–112 (DPLYSPYSSK…RLRDLLMAPR (89 aa)) are excised as a propeptide. Residues 47 to 123 (DTLGQDEGND…NRGSSGCFGS (77 aa)) form a disordered region. Over residues 77–94 (WDRERERQWPASDYKKPQ) the composition is skewed to basic and acidic residues. An intrachain disulfide couples Cys120 to Cys136.

This sequence belongs to the natriuretic peptide family. In terms of processing, cleaved upon secretion to produce the functional hormone. In terms of tissue distribution, expressed in heart atrium and to a lower extent in heart ventricle, but not in brain.

Its subcellular location is the secreted. Hormone playing a key role in cardiovascular homeostasis through regulation of natriuresis, diuresis, and vasodilation. Has a cGMP-stimulating activity. This Acipenser transmontanus (White sturgeon) protein is Natriuretic peptides A (nppa).